The following is a 692-amino-acid chain: Junctophilin-2 (692 aa).

The Cytoplasmic portion of the chain corresponds to 1–670; sequence MSGGRFDFDD…EVEVEEVPNT (670 aa). 6 MORN repeats span residues 14-36, 38-59, 60-79, 82-104, 106-128, and 129-151; these read YCGGWEGGKAHGHGLCTGPKGQG, YSGSWNFGFEVAGVYTWPSGNT, FEGYWSQGKRHGLGIETKGR, YKGEWTHGFKGRYGIRQSTNSGA, YEGTWNNGLQDGYGTETYADGGT, and YQGQFTNGMRHGYGVRQSVPYGM. S162 and S165 each carry phosphoserine. Disordered regions lie at residues 164 to 190 and 246 to 273; these read SSLRSEHSNGTVAPDSPAADGPTLPLP and LSSGASDAASTGSLAEGAEGPDDAAAPF. MORN repeat units lie at residues 285-307 and 308-330; these read YMGEWKNDKRSGFGVSERSSGLR and YEGEWLDNLRHGYGRTTLPDGHR. The Bipartite nuclear localization signal signature appears at 345-359; the sequence is KRRVLPLKSNKVRQK. The disordered stretch occupies residues 439–661; the sequence is NSESLLEPRE…KEVAQEAEAE (223 aa). Residues S440, S442, and S462 each carry the phosphoserine modification. The span at 457 to 471 shows a compositional bias: basic and acidic residues; the sequence is ERPRESPQLHERETP. Residue T470 is modified to Phosphothreonine. Positions 474 to 487 are enriched in pro residues; it reads EGGPPSPAGTPPQP. The residue at position 479 (S479) is a Phosphoserine. T483 carries the post-translational modification Phosphothreonine. A Nuclear localization signal motif is present at residues 488 to 492; the sequence is KRPRP. Residues S527 and S533 each carry the phosphoserine modification. Positions 573–582 are enriched in acidic residues; sequence PLEDEPEPEP. 4 positions are modified to phosphoserine: S589, S593, S604, and S609. Over residues 627 to 640 the composition is skewed to basic and acidic residues; sequence AEPKAKARKTEARG. The chain crosses the membrane as a helical; Anchor for type IV membrane protein span at residues 671–691; the sequence is VLICMVILLNIGLAILFVHLL.

This sequence belongs to the junctophilin family. As to quaternary structure, interacts with TRPC3. Interacts with BAG5 and HSPA8; the interaction with HSPA8 is increased in the presence of BAG5. Junctophilin-2 N-terminal fragment: Interacts with MEF2C. Post-translationally, proteolytically cleaved by calpain in response to cardiac stress. The major cleavage site takes place at the C-terminus and leads to the release of the Junctophilin-2 N-terminal fragment chain (JP2NT). Phosphorylation on Ser-165, probably by PKC, affects RYR1-mediated calcium ion release, interaction with TRPC3, and skeletal muscle myotubule development.

It localises to the cell membrane. It is found in the sarcoplasmic reticulum membrane. The protein resides in the endoplasmic reticulum membrane. Its subcellular location is the nucleus. Functionally, membrane-binding protein that provides a structural bridge between the plasma membrane and the sarcoplasmic reticulum and is required for normal excitation-contraction coupling in cardiomyocytes. Provides a structural foundation for functional cross-talk between the cell surface and intracellular Ca(2+) release channels by maintaining the 12-15 nm gap between the sarcolemma and the sarcoplasmic reticulum membranes in the cardiac dyads. Necessary for proper intracellular Ca(2+) signaling in cardiac myocytes via its involvement in ryanodine receptor-mediated calcium ion release. Contributes to the construction of skeletal muscle triad junctions. Transcription repressor required to safeguard against the deleterious effects of cardiac stress. Generated following cleavage of the Junctophilin-2 chain by calpain in response to cardiac stress in cardiomyocytes. Following cleavage and release from the membrane, translocates to the nucleus, binds DNA and represses expression of genes implicated in cell growth and differentiation, hypertrophy, inflammation and fibrosis. Modifies the transcription profile and thereby attenuates pathological remodeling in response to cardiac stress. Probably acts by competing with MEF2 transcription factors and TATA-binding proteins. This chain is Junctophilin-2, found in Rattus norvegicus (Rat).